Here is a 557-residue protein sequence, read N- to C-terminus: Low affinity inorganic phosphate transporter 8 (557 aa).

At 1–20 (MATSHGVLRSLDNAKTQSYH) the chain is on the cytoplasmic side. Residues 21–41 (YLAIVIAGMGFFTDAYDLFCI) form a helical membrane-spanning segment. Topologically, residues 42–70 (TAVTKLIGRLYYSDPTNHSPGILPTNVNN) are extracellular. Residues 71-91 (AITGVALCGTLAGQLFFGWLG) traverse the membrane as a helical segment. The Cytoplasmic portion of the chain corresponds to 92–98 (DKLGRKK). The chain crosses the membrane as a helical span at residues 99–119 (VYGITLTTMVGFALLSGLSFG). Residues 120-130 (STPKTVVTSLC) are Extracellular-facing. Residues 131-151 (FFRFWLGFGIGGDYPLSAVIM) form a helical membrane-spanning segment. Over 152–162 (SEYANQKTRGS) the chain is Cytoplasmic. The helical transmembrane segment at 163–183 (FIAAVFAMQGVGILVAGGVAM) threads the bilayer. Residues 184–210 (FVSKLFLLYFPAPDFETDAVLSTQPEG) are Extracellular-facing. Residues 211-231 (DFVWRIVLMFGAVPAALTYYW) form a helical membrane-spanning segment. The Cytoplasmic portion of the chain corresponds to 232–294 (RMKMPETARY…LFSSEFLNRH (63 aa)). A helical transmembrane segment spans residues 295-315 (GLHLLGTTSTWFLLDIAFYSL). Residues 316–346 (QLTQKDIYPTSGLVYKASKMNAIEEVFQLSR) are Extracellular-facing. A helical transmembrane segment spans residues 347-367 (AMFAVALIATVPGYWCTVFLI). The Cytoplasmic portion of the chain corresponds to 368–369 (EK). The chain crosses the membrane as a helical span at residues 370–390 (IGRFRIQLIGFLVMSVCMWFL). Residues 391 to 414 (GHNYRSFRGEESACKNGSKYSFCN) are Extracellular-facing. N-linked (GlcNAc...) asparagine glycosylation is present at Asn-406. A helical membrane pass occupies residues 415–435 (GNPVMFAILFGLTLFFANFGP). Residues 436 to 457 (NSTTFIVPAELFPARLRSTCHG) lie on the Cytoplasmic side of the membrane. The chain crosses the membrane as a helical span at residues 458-478 (ISAAAGKSGAIVGAFGVQSYI). Topologically, residues 479 to 490 (GNSHDKSKGTKQ) are extracellular. The chain crosses the membrane as a helical span at residues 491–511 (AIMALAVVNLLGFFFTFLVPE). The Cytoplasmic portion of the chain corresponds to 512-557 (TQGRSLEEISGEEKDFQGNNADEEISGERNGTRNASVDKSPETSMV). The disordered stretch occupies residues 519 to 557 (EISGEEKDFQGNNADEEISGERNGTRNASVDKSPETSMV). The segment covering 543–557 (TRNASVDKSPETSMV) has biased composition (polar residues).

This sequence belongs to the major facilitator superfamily. Phosphate:H(+) symporter (TC 2.A.1.9) family.

The protein localises to the cell membrane. The catalysed reaction is phosphate(in) + H(+)(in) = phosphate(out) + H(+)(out). Functionally, low-affinity transporter for external inorganic phosphate (Pi) that may be involved in the acquisition of phosphate released by arbuscular mycorrhizal (AM) fungi (e.g. Glomus versiforme and G.intraradices) during AM symbiosis; not required for mycorrhizal arbuscule development. This Medicago truncatula (Barrel medic) protein is Low affinity inorganic phosphate transporter 8.